Consider the following 232-residue polypeptide: Uracil phosphoribosyltransferase (232 aa).

Position 38 to 42 (38 to 42) interacts with GTP; the sequence is KGLVK. Residues arginine 87, arginine 112, and 140–148 each bind 5-phospho-alpha-D-ribose 1-diphosphate; that span reads DPMIATGST. Residues isoleucine 204 and 209–211 contribute to the uracil site; that span reads GDA. Aspartate 210 contacts 5-phospho-alpha-D-ribose 1-diphosphate.

The protein belongs to the UPRTase family. The cofactor is Mg(2+).

The catalysed reaction is UMP + diphosphate = 5-phospho-alpha-D-ribose 1-diphosphate + uracil. Its pathway is pyrimidine metabolism; UMP biosynthesis via salvage pathway; UMP from uracil: step 1/1. Its activity is regulated as follows. Allosterically activated by GTP. Its function is as follows. Catalyzes the conversion of uracil and 5-phospho-alpha-D-ribose 1-diphosphate (PRPP) to UMP and diphosphate. The protein is Uracil phosphoribosyltransferase of Thermococcus sibiricus (strain DSM 12597 / MM 739).